The chain runs to 362 residues: tRNA 2-selenouridine synthase (362 aa).

One can recognise a Rhodanese domain in the interval 14-137 (LANETPIIDV…LRQATIEMTN (124 aa)). Cys97 acts as the S-selanylcysteine intermediate in catalysis.

It belongs to the SelU family. As to quaternary structure, monomer.

The enzyme catalyses 5-methylaminomethyl-2-thiouridine(34) in tRNA + selenophosphate + (2E)-geranyl diphosphate + H2O + H(+) = 5-methylaminomethyl-2-selenouridine(34) in tRNA + (2E)-thiogeraniol + phosphate + diphosphate. It catalyses the reaction 5-methylaminomethyl-2-thiouridine(34) in tRNA + (2E)-geranyl diphosphate = 5-methylaminomethyl-S-(2E)-geranyl-thiouridine(34) in tRNA + diphosphate. The catalysed reaction is 5-methylaminomethyl-S-(2E)-geranyl-thiouridine(34) in tRNA + selenophosphate + H(+) = 5-methylaminomethyl-2-(Se-phospho)selenouridine(34) in tRNA + (2E)-thiogeraniol. It carries out the reaction 5-methylaminomethyl-2-(Se-phospho)selenouridine(34) in tRNA + H2O = 5-methylaminomethyl-2-selenouridine(34) in tRNA + phosphate. Functionally, involved in the post-transcriptional modification of the uridine at the wobble position (U34) of tRNA(Lys), tRNA(Glu) and tRNA(Gln). Catalyzes the conversion of 2-thiouridine (S2U-RNA) to 2-selenouridine (Se2U-RNA). Acts in a two-step process involving geranylation of 2-thiouridine (S2U) to S-geranyl-2-thiouridine (geS2U) and subsequent selenation of the latter derivative to 2-selenouridine (Se2U) in the tRNA chain. The chain is tRNA 2-selenouridine synthase from Proteus mirabilis (strain HI4320).